A 319-amino-acid polypeptide reads, in one-letter code: BTB/POZ domain-containing adapter for CUL3-mediated RhoA degradation protein 2 (319 aa).

Positions 31–99 (KYIRLNVGGC…LRDDTIALPK (69 aa)) constitute a BTB domain.

It belongs to the BACURD family. Component of the BCR(TNFAIP1) E3 ubiquitin ligase complex, at least composed of cul3, tnfaip1/bacurd2 and rbx1.

The protein localises to the cytoplasm. Its subcellular location is the nucleus. It localises to the endosome. It functions in the pathway protein modification; protein ubiquitination. In terms of biological role, substrate-specific adapter of a BCR (BTB-CUL3-RBX1) E3 ubiquitin-protein ligase complex involved in regulation of cytoskeleton structure. The BCR(TNFAIP1) E3 ubiquitin ligase complex mediates the ubiquitination of target proteins, leading to their degradation by the proteasome. The sequence is that of BTB/POZ domain-containing adapter for CUL3-mediated RhoA degradation protein 2 (tnfaip1) from Xenopus laevis (African clawed frog).